The following is a 122-amino-acid chain: Large ribosomal subunit protein uL14 (122 aa).

It belongs to the universal ribosomal protein uL14 family. In terms of assembly, part of the 50S ribosomal subunit. Forms a cluster with proteins L3 and L19. In the 70S ribosome, L14 and L19 interact and together make contacts with the 16S rRNA in bridges B5 and B8.

Functionally, binds to 23S rRNA. Forms part of two intersubunit bridges in the 70S ribosome. This is Large ribosomal subunit protein uL14 from Lactobacillus helveticus (strain DPC 4571).